The following is a 307-amino-acid chain: Undecaprenyl-diphosphatase 2 (307 aa).

A run of 8 helical transmembrane segments spans residues 19–41 (GVTE…IIGF), 56–76 (IHMF…VLYW), 117–137 (FKFW…GLPF), 144–164 (LLFF…WMIF), 208–228 (IIGA…SFFL), 229–249 (AIPM…VVLS), 251–271 (VQIL…LVVV), and 285–305 (IFAV…FTKV).

Belongs to the UppP family.

It is found in the cell membrane. The catalysed reaction is di-trans,octa-cis-undecaprenyl diphosphate + H2O = di-trans,octa-cis-undecaprenyl phosphate + phosphate + H(+). Catalyzes the dephosphorylation of undecaprenyl diphosphate (UPP). Confers resistance to bacitracin. The polypeptide is Undecaprenyl-diphosphatase 2 (Clostridium acetobutylicum (strain ATCC 824 / DSM 792 / JCM 1419 / IAM 19013 / LMG 5710 / NBRC 13948 / NRRL B-527 / VKM B-1787 / 2291 / W)).